Consider the following 324-residue polypeptide: Phospho-N-acetylmuramoyl-pentapeptide-transferase (324 aa).

10 helical membrane-spanning segments follow: residues 5–25 (VILF…PILI), 50–70 (GTPT…AIVM), 77–97 (LSAE…LGFL), 117–137 (LIGQ…CHFS), 147–167 (LSID…VGGS), 176–196 (LDGL…ILAW), 203–223 (VAIF…FNAH), 227–247 (VFMG…VAIL), 250–270 (LEIL…SVIL), and 302–322 (VVVT…YIEV).

The protein belongs to the glycosyltransferase 4 family. MraY subfamily. Mg(2+) is required as a cofactor.

It localises to the cell membrane. It carries out the reaction UDP-N-acetyl-alpha-D-muramoyl-L-alanyl-gamma-D-glutamyl-meso-2,6-diaminopimeloyl-D-alanyl-D-alanine + di-trans,octa-cis-undecaprenyl phosphate = di-trans,octa-cis-undecaprenyl diphospho-N-acetyl-alpha-D-muramoyl-L-alanyl-D-glutamyl-meso-2,6-diaminopimeloyl-D-alanyl-D-alanine + UMP. It functions in the pathway cell wall biogenesis; peptidoglycan biosynthesis. Catalyzes the initial step of the lipid cycle reactions in the biosynthesis of the cell wall peptidoglycan: transfers peptidoglycan precursor phospho-MurNAc-pentapeptide from UDP-MurNAc-pentapeptide onto the lipid carrier undecaprenyl phosphate, yielding undecaprenyl-pyrophosphoryl-MurNAc-pentapeptide, known as lipid I. The protein is Phospho-N-acetylmuramoyl-pentapeptide-transferase of Bacillus velezensis (strain DSM 23117 / BGSC 10A6 / LMG 26770 / FZB42) (Bacillus amyloliquefaciens subsp. plantarum).